The following is an 87-amino-acid chain: Mitochondrial import protein 2 (87 aa).

The Cytoplasmic segment spans residues 1–53 (MADSEDTSVILQGIDTINSVEGLEEDGYLSDEDTSLSNELADAQRQWEESLQQ). The helical transmembrane segment at 54-71 (LNKLLNWVLLPLLGKYIG) threads the bilayer. Residues 72–87 (RRMAKTLWSRFIEHFV) lie on the Mitochondrial intermembrane side of the membrane.

The protein belongs to the MIM2 family. In terms of assembly, component of the MIM complex containing at least MIM1 and MIM2. Interacts with MIM1; interaction is direct.

It localises to the mitochondrion outer membrane. Component of the MIM complex required for outer membrane protein import. Involved in import of the subset of proteins with multiple alpha-helical transmembrane segments, including UGO1, TOM20 and FZO1. The protein is Mitochondrial import protein 2 of Saccharomyces cerevisiae (strain ATCC 204508 / S288c) (Baker's yeast).